Consider the following 388-residue polypeptide: 3-oxo-tetronate kinase (388 aa).

Residues S258 and 360 to 363 (GGET) each bind ATP.

The protein belongs to the four-carbon acid sugar kinase family.

It carries out the reaction 3-dehydro-L-erythronate + ATP = 3-dehydro-4-O-phospho-L-erythronate + ADP + H(+). It catalyses the reaction 3-dehydro-D-erythronate + ATP = 3-dehydro-4-O-phospho-D-erythronate + ADP + H(+). Catalyzes the ATP-dependent phosphorylation of 3-oxo-tetronate to 3-oxo-tetronate 4-phosphate. This is 3-oxo-tetronate kinase from Escherichia coli (strain K12).